The sequence spans 201 residues: FMN-dependent NADH:quinone oxidoreductase (201 aa).

FMN contacts are provided by residues Ser-10, Ser-16–Ser-18, Met-96–Phe-99, and Ser-140–Gly-143.

The protein belongs to the azoreductase type 1 family. Homodimer. The cofactor is FMN.

It catalyses the reaction 2 a quinone + NADH + H(+) = 2 a 1,4-benzosemiquinone + NAD(+). The catalysed reaction is N,N-dimethyl-1,4-phenylenediamine + anthranilate + 2 NAD(+) = 2-(4-dimethylaminophenyl)diazenylbenzoate + 2 NADH + 2 H(+). Functionally, quinone reductase that provides resistance to thiol-specific stress caused by electrophilic quinones. Also exhibits azoreductase activity. Catalyzes the reductive cleavage of the azo bond in aromatic azo compounds to the corresponding amines. In Escherichia coli O157:H7, this protein is FMN-dependent NADH:quinone oxidoreductase.